A 723-amino-acid polypeptide reads, in one-letter code: Threonine--tRNA ligase, mitochondrial (723 aa).

A Phosphoserine modification is found at Ser-57. The TGS domain maps to 64–126; it reads RTIKISLPEG…ETDCHLRFLT (63 aa).

The protein belongs to the class-II aminoacyl-tRNA synthetase family. Homodimer.

The protein localises to the mitochondrion matrix. It carries out the reaction tRNA(Thr) + L-threonine + ATP = L-threonyl-tRNA(Thr) + AMP + diphosphate + H(+). Catalyzes the attachment of threonine to tRNA(Thr) in a two-step reaction: threonine is first activated by ATP to form Thr-AMP and then transferred to the acceptor end of tRNA(Thr). Also edits incorrectly charged tRNA(Thr) via its editing domain. The sequence is that of Threonine--tRNA ligase, mitochondrial (Tars2) from Rattus norvegicus (Rat).